The primary structure comprises 305 residues: Translation initiation factor eIF2B subunit alpha (305 aa).

The protein belongs to the eIF-2B alpha/beta/delta subunits family. In terms of assembly, component of the translation initiation factor 2B (eIF2B) complex which is a heterodecamer of two sets of five different subunits: alpha, beta, gamma, delta and epsilon. Subunits alpha, beta and delta comprise a regulatory subcomplex and subunits epsilon and gamma comprise a catalytic subcomplex. Within the complex, the hexameric regulatory complex resides at the center, with the two heterodimeric catalytic subcomplexes bound on opposite sides.

It is found in the cytoplasm. The protein localises to the cytosol. Its function is as follows. Acts as a component of the translation initiation factor 2B (eIF2B) complex, which catalyzes the exchange of GDP for GTP on eukaryotic initiation factor 2 (eIF2) gamma subunit. Its guanine nucleotide exchange factor activity is repressed when bound to eIF2 complex phosphorylated on the alpha subunit, thereby limiting the amount of methionyl-initiator methionine tRNA available to the ribosome and consequently global translation is repressed. The sequence is that of Translation initiation factor eIF2B subunit alpha from Caenorhabditis elegans.